The primary structure comprises 453 residues: Bifunctional protein GlmU (453 aa).

The interval 1–225 is pyrophosphorylase; sequence MNIVILAAGT…EWETLGVNSK (225 aa). UDP-N-acetyl-alpha-D-glucosamine-binding positions include 6-9, Lys20, Gln71, 76-77, 98-100, Gly135, Glu150, Asn165, and Asn223; these read LAAG, GT, and YGD. Position 100 (Asp100) interacts with Mg(2+). Asn223 provides a ligand contact to Mg(2+). A linker region spans residues 226–246; sequence AQLAELERIHQRNLADALLAA. An N-acetyltransferase region spans residues 247 to 453; sequence GVTLADPARI…GYVRPVKKKS (207 aa). Positions 329 and 347 each coordinate UDP-N-acetyl-alpha-D-glucosamine. His359 functions as the Proton acceptor in the catalytic mechanism. UDP-N-acetyl-alpha-D-glucosamine-binding residues include Tyr362 and Asn373. Acetyl-CoA-binding positions include Ala376, 382 to 383, Ser401, and Ala419; that span reads NY.

This sequence in the N-terminal section; belongs to the N-acetylglucosamine-1-phosphate uridyltransferase family. It in the C-terminal section; belongs to the transferase hexapeptide repeat family. As to quaternary structure, homotrimer. Mg(2+) serves as cofactor.

Its subcellular location is the cytoplasm. It carries out the reaction alpha-D-glucosamine 1-phosphate + acetyl-CoA = N-acetyl-alpha-D-glucosamine 1-phosphate + CoA + H(+). The catalysed reaction is N-acetyl-alpha-D-glucosamine 1-phosphate + UTP + H(+) = UDP-N-acetyl-alpha-D-glucosamine + diphosphate. It functions in the pathway nucleotide-sugar biosynthesis; UDP-N-acetyl-alpha-D-glucosamine biosynthesis; N-acetyl-alpha-D-glucosamine 1-phosphate from alpha-D-glucosamine 6-phosphate (route II): step 2/2. Its pathway is nucleotide-sugar biosynthesis; UDP-N-acetyl-alpha-D-glucosamine biosynthesis; UDP-N-acetyl-alpha-D-glucosamine from N-acetyl-alpha-D-glucosamine 1-phosphate: step 1/1. It participates in bacterial outer membrane biogenesis; LPS lipid A biosynthesis. Catalyzes the last two sequential reactions in the de novo biosynthetic pathway for UDP-N-acetylglucosamine (UDP-GlcNAc). The C-terminal domain catalyzes the transfer of acetyl group from acetyl coenzyme A to glucosamine-1-phosphate (GlcN-1-P) to produce N-acetylglucosamine-1-phosphate (GlcNAc-1-P), which is converted into UDP-GlcNAc by the transfer of uridine 5-monophosphate (from uridine 5-triphosphate), a reaction catalyzed by the N-terminal domain. In Burkholderia mallei (strain NCTC 10247), this protein is Bifunctional protein GlmU.